We begin with the raw amino-acid sequence, 504 residues long: Sphingosine-1-phosphate transporter SPNS2 (504 aa).

11 helical membrane passes run 48 to 70, 94 to 114, 122 to 142, 182 to 202, 214 to 234, 269 to 289, 317 to 337, 351 to 371, 375 to 395, 415 to 435, and 460 to 480; these read LLRCRTPLVAAGILSFGNVLNYM, GLLQTVFICSFMVAAPIFGYL, IILSCGIFFWSAVTLLSSFIT, VMLSVFYLAIPLGSGLGYILG, WALRVSPMLGLTAGTLILIFV, VFSSLASAAVSFATGAFGIWI, LIFGAITCVTGLLGVVIGAVT, LVCAVSMLGSAIFICLIFVVA, IVGAYICIFIGETLLFLNWAI, FQGFTSHLLGDAGSPYLIGLI, and LCPFVIVLGGMFFLATALFFL.

The protein belongs to the major facilitator superfamily. Spinster (TC 2.A.1.49) family.

The protein localises to the cell membrane. Its subcellular location is the endosome membrane. The enzyme catalyses sphing-4-enine 1-phosphate(in) = sphing-4-enine 1-phosphate(out). The catalysed reaction is sphinganine 1-phosphate(in) = sphinganine 1-phosphate(out). Its function is as follows. Lipid transporter that specifically mediates export of sphingosine-1-phosphate (sphing-4-enine 1-phosphate, S1P) and sphinganine-1-phosphate, which play critical roles in regulating heart development. Mediates the export of S1P from cells in the extraembryonic yolk syncytial layer (YSL), thereby regulating myocardial precursor migration. This chain is Sphingosine-1-phosphate transporter SPNS2, found in Danio rerio (Zebrafish).